Reading from the N-terminus, the 612-residue chain is DNA mismatch repair protein MutL (612 aa).

This sequence belongs to the DNA mismatch repair MutL/HexB family.

Its function is as follows. This protein is involved in the repair of mismatches in DNA. It is required for dam-dependent methyl-directed DNA mismatch repair. May act as a 'molecular matchmaker', a protein that promotes the formation of a stable complex between two or more DNA-binding proteins in an ATP-dependent manner without itself being part of a final effector complex. The protein is DNA mismatch repair protein MutL of Herminiimonas arsenicoxydans.